A 473-amino-acid chain; its full sequence is Cysteine protease ATG4A (473 aa).

Residues 1-33 form a disordered region; the sequence is MTSLPGRGVSPSSSDPLCEGNAAPSSSSSGQDL. Cys-160 acts as the Nucleophile in catalysis. Catalysis depends on residues Asp-357 and His-359.

It belongs to the peptidase C54 family. Interacts with ATG8.

Its subcellular location is the cytoplasm. It catalyses the reaction [protein]-C-terminal L-amino acid-glycyl-phosphatidylethanolamide + H2O = [protein]-C-terminal L-amino acid-glycine + a 1,2-diacyl-sn-glycero-3-phosphoethanolamine. In terms of biological role, cysteine protease that plays a key role in autophagy by mediating both proteolytic activation and delipidation of ATG8 family proteins. The protease activity is required for proteolytic activation of ATG8 family proteins: cleaves the C-terminal amino acid of ATG8 proteins to reveal a C-terminal glycine. Exposure of the glycine at the C-terminus is essential for ATG8 proteins conjugation to phosphatidylethanolamine (PE) and insertion to membranes, which is necessary for autophagy. In addition to the protease activity, also mediates delipidation of PE-conjugated ATG8 proteins. In Oryza sativa subsp. indica (Rice), this protein is Cysteine protease ATG4A (ATG4A).